A 678-amino-acid chain; its full sequence is NADPH--cytochrome P450 reductase (678 aa).

Gly-2 carries the N-acetylglycine modification. At 2 to 22 (GDSHEDTSATVPEAVAEEVSL) the chain is on the lumenal side. The chain crosses the membrane as a helical span at residues 23–43 (FSTTDIVLFSLIVGVLTYWFI). Residues 44–678 (FKKKKEEIPE…KGRYSLDVWS (635 aa)) are Cytoplasmic-facing. A Flavodoxin-like domain is found at 80-224 (IIVFYGSQTG…DFITWREQFW (145 aa)). Residues 86 to 91 (SQTGTA), 138 to 141 (ATYG), 173 to 182 (LGNKTYEHFN), and Asp-208 contribute to the FMN site. Residues 279 to 521 (KNPFLAAVTT…FVRKSQFRLP (243 aa)) enclose the FAD-binding FR-type domain. Position 298 (Arg-298) interacts with NADP(+). FAD-binding positions include Arg-424, 454 to 457 (RYYS), 472 to 474 (CAV), Tyr-478, and 488 to 491 (GVAT). Residues Thr-535, 596-597 (SR), 602-606 (KVYVQ), and Asp-639 contribute to the NADP(+) site. Trp-677 provides a ligand contact to FAD.

Belongs to the NADPH--cytochrome P450 reductase family. The protein in the N-terminal section; belongs to the flavodoxin family. It in the C-terminal section; belongs to the flavoprotein pyridine nucleotide cytochrome reductase family. It depends on FAD as a cofactor. FMN serves as cofactor.

The protein resides in the endoplasmic reticulum membrane. The enzyme catalyses 2 oxidized [cytochrome P450] + NADPH = 2 reduced [cytochrome P450] + NADP(+) + H(+). In terms of biological role, this enzyme is required for electron transfer from NADP to cytochrome P450 in microsomes. It can also provide electron transfer to heme oxygenase and cytochrome B5. The sequence is that of NADPH--cytochrome P450 reductase from Mus musculus (Mouse).